The sequence spans 247 residues: Nodulation protein H (247 aa).

The segment at 1-16 (MTHSTLPPRPFAILAM) is hydrophobic.

In terms of biological role, required for the formation of sulfated nod factor. Proposed to transfer activated sulfate (PAPS) to a N-acetylglucosamine of the nod factor. In Rhizobium meliloti (Ensifer meliloti), this protein is Nodulation protein H (nodH).